The chain runs to 281 residues: Arabinose operon regulatory protein (281 aa).

Positions 8, 24, 38, 82, and 93 each coordinate alpha-L-arabinopyanose. In terms of domain architecture, HTH araC/xylS-type spans 180–279 (RDACQYISDH…GASPSEFRAG (100 aa)). 2 consecutive DNA-binding regions (H-T-H motif) follow at residues 198–219 (ASVAQHVCLSPSRLSHLFRQQL) and 246–269 (IATVGRNVGFDDQLYFSRVFKKCT).

In terms of assembly, homodimer.

Its subcellular location is the cytoplasm. In terms of biological role, transcription factor that regulates the expression of several genes involved in the transport and metabolism of L-arabinose. The polypeptide is Arabinose operon regulatory protein (Salmonella typhimurium (strain LT2 / SGSC1412 / ATCC 700720)).